Here is a 162-residue protein sequence, read N- to C-terminus: Lipid droplet assembly factor 1-A (162 aa).

The Cytoplasmic segment spans residues 1–42 (MASAENLYQEKMQELQKQMNKVMQTINNHSKVEAFLNSPFGQ). Residues 43 to 63 (YLDQHPFVTLSLLVFISLSAV) traverse the membrane as a helical segment. Residues 64–65 (PV) are Lumenal-facing. The chain crosses the membrane as a helical span at residues 66-86 (GIFLTLIAGTAIAVCLAVLII). E87 is a topological domain (cytoplasmic). Residues 88 to 108 (GIVISVGGIALLCILCGLAVM) form a helical membrane-spanning segment. Position 109 (S109) is a topological domain, lumenal. A helical membrane pass occupies residues 110 to 130 (LGVAAVLCVSYVAGSSVLNYI). Residues 131-162 (HAYRVTVGTRGRSGPISLNHETTTAEKSYRSS) lie on the Cytoplasmic side of the membrane.

This sequence belongs to the LDAF1 family.

It is found in the endoplasmic reticulum membrane. It localises to the lipid droplet. Functionally, plays an important role in the formation of lipid droplets (LD) which are storage organelles at the center of lipid and energy homeostasis. The protein is Lipid droplet assembly factor 1-A of Xenopus laevis (African clawed frog).